Here is a 225-residue protein sequence, read N- to C-terminus: Putative ATP-dependent Clp protease proteolytic subunit-like (225 aa).

It belongs to the peptidase S14 family.

Has lost the two conserved residues (Ser and His) proposed to be part of the active site. Therefore it could be inactive. The sequence is that of Putative ATP-dependent Clp protease proteolytic subunit-like (clpR) from Synechocystis sp. (strain ATCC 27184 / PCC 6803 / Kazusa).